The primary structure comprises 260 residues: Kallikrein-8 (260 aa).

Residues 1-28 form the signal peptide; it reads MGRPPPCAIQPWILLLLFMGAWAGLTRA. Residues 29–32 constitute a propeptide that is removed on maturation; that stretch reads QGSK. In terms of domain architecture, Peptidase S1 spans 33–257; the sequence is ILEGRECIPH…YTTWIKKTMD (225 aa). 6 disulfides stabilise this stretch: Cys39–Cys173, Cys58–Cys74, Cys145–Cys246, Cys152–Cys218, Cys184–Cys198, and Cys208–Cys233. His73 acts as the Charge relay system in catalysis. Asn110 is a glycosylation site (N-linked (GlcNAc...) asparagine). Catalysis depends on Asp120, which acts as the Charge relay system. Ser212 serves as the catalytic Charge relay system.

Belongs to the peptidase S1 family. Kallikrein subfamily. In terms of assembly, interacts with SPINK9. Expressed in the limbic system of mouse brain and is localized at highest concentration in pyramidal neurons of the hippocampal CA1-3 subfields. Also detected in spinal cord gray matter and in keratinized stratified epithelia of epidermis, hair, tongue, palate, nasal cavity, pharynges, esophagus and forestomach. In skin and mucus membranes, expressed in stratum spinosum and stratum granulosum. Expressed during estrus in vaginal epithelial cells but not stromal cells. Within the vaginal epithelium, expressed in prickle cells, granular cells and parakeratotic cells but not in basal cells. Not expressed in uterus. Expressed in the keratinocytes.

The protein localises to the secreted. The protein resides in the cytoplasm. The catalysed reaction is Cleavage of amide substrates following the basic amino acids Arg or Lys at the P1 position, with a preference for Arg over Lys.. Its activity is regulated as follows. Strongly inhibited by diisopropyl fluorophosphate, leupeptin and (4-amidinophenyl)methanesulfonyl 1-fluoride. In terms of biological role, serine protease which is capable of degrading a number of proteins such as casein, fibrinogen, kininogen, fibronectin and collagen type IV. Also cleaves L1CAM in response to increased neural activity. Induces neurite outgrowth and fasciculation of cultured hippocampal neurons. Plays a role in the formation and maturation of orphan and small synaptic boutons in the Schaffer-collateral pathway, regulates Schaffer-collateral long-term potentiation in the hippocampus and is required for memory acquisition and synaptic plasticity. Involved in skin desquamation and keratinocyte proliferation. Plays a role in the secondary phase of pathogenesis following spinal cord injury. This is Kallikrein-8 (Klk8) from Mus musculus (Mouse).